The following is a 159-amino-acid chain: Dihydrofolate reductase (159 aa).

Residues 2–157 (TLSILVAHDL…IPHTFLHLIR (156 aa)) form the DHFR domain. 6 to 8 (LVA) serves as a coordination point for substrate. Residues 7 to 8 (VA) and 15 to 20 (IGFENQ) each bind NADP(+). Residue Asp-28 coordinates substrate. Residue 44-47 (GRKT) coordinates NADP(+). Position 58 (Arg-58) interacts with substrate. NADP(+)-binding positions include 63–66 (LTSD) and 93–98 (FGGQTL). Substrate is bound at residue Thr-112.

This sequence belongs to the dihydrofolate reductase family.

It carries out the reaction (6S)-5,6,7,8-tetrahydrofolate + NADP(+) = 7,8-dihydrofolate + NADPH + H(+). It participates in cofactor biosynthesis; tetrahydrofolate biosynthesis; 5,6,7,8-tetrahydrofolate from 7,8-dihydrofolate: step 1/1. In terms of biological role, key enzyme in folate metabolism. Catalyzes an essential reaction for de novo glycine and purine synthesis, and for DNA precursor synthesis. The sequence is that of Dihydrofolate reductase (folA) from Staphylococcus aureus (strain COL).